We begin with the raw amino-acid sequence, 970 residues long: Anaphase-promoting complex subunit 3 (970 aa).

TPR repeat units follow at residues 35–68 (EDNLFKIAQIYYQMGKINQCLLILQQHPQITMIK), 74–107 (ALSNYDLGNIQEAESSIIKCCIYFEKYFQPNNNN), 142–175 (NNNSNSNNNENEYYGIYSDILCEFDDIVDINSIS), and 185–218 (GSVYYLMGLISKRKNQKEKAIKYLKKSVYTYPFL). Residues 106–149 (NNNNNNNNNNNNNNNNNNNNNNNKDKCNNSNKNNDSNNNSNSNN) form a disordered region. The segment at 274-300 (KVNNNNNNNNNNNNNINNNNSSNKNNE) is disordered. TPR repeat units follow at residues 319–353 (IKPNNFIKPPYHPNHRVGLTPSSFYDSSIHITPIN) and 361–394 (TNQQQQQQQQQQPQQPSQQNLQKYNNRYFVTPQT). Disordered regions lie at residues 358–379 (IQQTNQQQQQQQQQQPQQPSQQ), 414–525 (PIPM…TTTT), and 556–582 (SSLSDDDYDEENHHYQQHHHLHHHNKS). Residues 359–379 (QQTNQQQQQQQQQQPQQPSQQ) show a composition bias toward low complexity. A compositionally biased stretch (polar residues) spans 424 to 443 (SKGSQHPPSSNSQTPYTPST). Residues 446–460 (VHHHQKQQPHQHKKS) are compositionally biased toward basic residues. Over residues 500–525 (TSSTSKQQQQQQQTKQQTTTTTTTTT) the composition is skewed to low complexity. 9 TPR repeats span residues 546–580 (TEEFSLKSLSSSLSDDDYDEENHHYQQHHHLHHHN), 636–671 (LELFFILADSYRLLCLYLCKEAIESFKRLSEEQYRT), 672–705 (GWVLTKVAKAYHELIDYKEARSIFQEVSQMEPYR), 740–773 (PYSWVVVGNCFSLQRDHEAAIKLFRRAIQLDPDM), 775–807 (YAYTLCGHEYLANDELELALNAFRMAIRCDPRH), 808–841 (YNAFYGIGLIYYRQEKYNLAEYHFRKALSINESS), 843–876 (VLCCYLGMTLQHNPNKIQDGIDMLYRSIEIQPKN), 878–910 (FAKFKLAAFLFANQQYHHAIDQLLEFKEIEPKE), and 911–944 (TPIYILLGKCYKQLGELDKALDSLNTALDLDPKN). Residues 570 to 580 (YQQHHHLHHHN) show a composition bias toward basic residues.

This sequence belongs to the APC3/CDC27 family. As to quaternary structure, the APC/C is composed of at least 13 subunits that stay tightly associated throughout the cell cycle: anapc1, anapc2, anapc3, anapc4, anapc5, anapc6, anapc7, anapc8, anapc10, anapc11, cdc20, cdc26 and cdh1.

It is found in the nucleus. Its pathway is protein modification; protein ubiquitination. Its function is as follows. Component of the anaphase promoting complex/cyclosome (APC/C), a cell cycle-regulated E3 ubiquitin-protein ligase complex that controls progression through mitosis and the G1 phase of the cell cycle. This Dictyostelium discoideum (Social amoeba) protein is Anaphase-promoting complex subunit 3 (anapc3).